The following is a 453-amino-acid chain: CCA-adding enzyme (453 aa).

Residues Ser-53 and Lys-56 each coordinate ATP. Ser-53 and Lys-56 together coordinate CTP. Asp-65, Asp-67, and Asp-119 together coordinate Mg(2+). ATP is bound by residues His-142, Lys-161, and Tyr-170. CTP-binding residues include His-142, Lys-161, and Tyr-170.

It belongs to the tRNA nucleotidyltransferase/poly(A) polymerase family. Archaeal CCA-adding enzyme subfamily. Homodimer. It depends on Mg(2+) as a cofactor.

The enzyme catalyses a tRNA precursor + 2 CTP + ATP = a tRNA with a 3' CCA end + 3 diphosphate. It carries out the reaction a tRNA with a 3' CCA end + 2 CTP + ATP = a tRNA with a 3' CCACCA end + 3 diphosphate. Functionally, catalyzes the addition and repair of the essential 3'-terminal CCA sequence in tRNAs without using a nucleic acid template. Adds these three nucleotides in the order of C, C, and A to the tRNA nucleotide-73, using CTP and ATP as substrates and producing inorganic pyrophosphate. tRNA 3'-terminal CCA addition is required both for tRNA processing and repair. Also involved in tRNA surveillance by mediating tandem CCA addition to generate a CCACCA at the 3' terminus of unstable tRNAs. While stable tRNAs receive only 3'-terminal CCA, unstable tRNAs are marked with CCACCA and rapidly degraded. This chain is CCA-adding enzyme, found in Pyrococcus furiosus (strain ATCC 43587 / DSM 3638 / JCM 8422 / Vc1).